Consider the following 169-residue polypeptide: uncharacterized protein (169 aa).

Residues tyrosine 10–leucine 30 traverse the membrane as a helical segment. Positions glutamine 98–serine 123 are disordered. The span at lysine 100–proline 115 shows a compositional bias: low complexity.

It is found in the membrane. This is an uncharacterized protein from Acanthamoeba polyphaga (Amoeba).